An 83-amino-acid chain; its full sequence is Cytochrome b559 subunit alpha (83 aa).

The chain crosses the membrane as a helical span at residues Val22–Trp36. His24 lines the heme pocket.

The protein belongs to the PsbE/PsbF family. Heterodimer of an alpha subunit and a beta subunit. PSII is composed of 1 copy each of membrane proteins PsbA, PsbB, PsbC, PsbD, PsbE, PsbF, PsbH, PsbI, PsbJ, PsbK, PsbL, PsbM, PsbT, PsbX, PsbY, PsbZ, Psb30/Ycf12, peripheral proteins PsbO, CyanoQ (PsbQ), PsbU, PsbV and a large number of cofactors. It forms dimeric complexes. Heme b serves as cofactor.

It is found in the cellular thylakoid membrane. In terms of biological role, this b-type cytochrome is tightly associated with the reaction center of photosystem II (PSII). PSII is a light-driven water:plastoquinone oxidoreductase that uses light energy to abstract electrons from H(2)O, generating O(2) and a proton gradient subsequently used for ATP formation. It consists of a core antenna complex that captures photons, and an electron transfer chain that converts photonic excitation into a charge separation. This Synechococcus elongatus (strain ATCC 33912 / PCC 7942 / FACHB-805) (Anacystis nidulans R2) protein is Cytochrome b559 subunit alpha.